Consider the following 467-residue polypeptide: Geranylgeranyl diphosphate reductase, chloroplastic (467 aa).

A chloroplast-targeting transit peptide spans 1–43; the sequence is MATTVTLKSFTGLRQSSTEQTNFVSHVPSSLSLPQRRTSLRVT.

Belongs to the geranylgeranyl reductase family. ChlP subfamily. In terms of assembly, part of the FLU-containing chloroplast membrane complex composed of FLU, CRD1, PORB, PORC, CHLP and HEMA1.

The protein resides in the plastid. It localises to the chloroplast membrane. The catalysed reaction is phytyl diphosphate + 3 NADP(+) = geranylgeranyl diphosphate + 3 NADPH + 3 H(+). The protein operates within porphyrin-containing compound metabolism; chlorophyll biosynthesis. It participates in cofactor biosynthesis; tocopherol biosynthesis. Functionally, catalyzes the reduction of geranylgeranyl diphosphate to phytyl diphosphate, providing phytol for both tocopherol and chlorophyll synthesis. The polypeptide is Geranylgeranyl diphosphate reductase, chloroplastic (CHLP) (Arabidopsis thaliana (Mouse-ear cress)).